A 496-amino-acid polypeptide reads, in one-letter code: Glycerol kinase (496 aa).

T12 is an ADP binding site. Residues T12, T13, and S14 each contribute to the ATP site. T12 serves as a coordination point for sn-glycerol 3-phosphate. R16 lines the ADP pocket. R82, E83, and Y134 together coordinate sn-glycerol 3-phosphate. Glycerol is bound by residues R82, E83, and Y134. H230 bears the Phosphohistidine; by HPr mark. Residue D244 coordinates sn-glycerol 3-phosphate. 2 residues coordinate glycerol: D244 and Q245. Residues T266 and G309 each coordinate ADP. ATP is bound by residues T266, G309, Q313, and G410. G410 and N414 together coordinate ADP.

The protein belongs to the FGGY kinase family. In terms of assembly, homotetramer and homodimer (in equilibrium). The phosphoenolpyruvate-dependent sugar phosphotransferase system (PTS), including enzyme I, and histidine-containing protein (HPr) are required for the phosphorylation, which leads to the activation of the enzyme.

The enzyme catalyses glycerol + ATP = sn-glycerol 3-phosphate + ADP + H(+). It functions in the pathway polyol metabolism; glycerol degradation via glycerol kinase pathway; sn-glycerol 3-phosphate from glycerol: step 1/1. Activated by phosphorylation and inhibited by fructose 1,6-bisphosphate (FBP). Its function is as follows. Key enzyme in the regulation of glycerol uptake and metabolism. Catalyzes the phosphorylation of glycerol to yield sn-glycerol 3-phosphate. The protein is Glycerol kinase of Bacillus licheniformis (strain ATCC 14580 / DSM 13 / JCM 2505 / CCUG 7422 / NBRC 12200 / NCIMB 9375 / NCTC 10341 / NRRL NRS-1264 / Gibson 46).